The following is a 201-amino-acid chain: MKTDDKDREGGDSHGAIGAKLMEYALKVRKVFVTGGVDEKMAKDVVQQLHILASISDDPIYMFVNSPGGHVESGDMIFDAIRFITPKVIMIGSGSVASAGALIYAAADKENRYSLPNTRFLLHQPSGGIQGPASNIEIYRREIVRMKERLDRIFAEATGQTPEKISADTERDFWLNAEEAVQYGLVNKIIVSEREITLPGQ.

S98 (nucleophile) is an active-site residue. H123 is a catalytic residue.

This sequence belongs to the peptidase S14 family. As to quaternary structure, fourteen ClpP subunits assemble into 2 heptameric rings which stack back to back to give a disk-like structure with a central cavity, resembling the structure of eukaryotic proteasomes.

It is found in the cytoplasm. It carries out the reaction Hydrolysis of proteins to small peptides in the presence of ATP and magnesium. alpha-casein is the usual test substrate. In the absence of ATP, only oligopeptides shorter than five residues are hydrolyzed (such as succinyl-Leu-Tyr-|-NHMec, and Leu-Tyr-Leu-|-Tyr-Trp, in which cleavage of the -Tyr-|-Leu- and -Tyr-|-Trp bonds also occurs).. Its function is as follows. Cleaves peptides in various proteins in a process that requires ATP hydrolysis. Has a chymotrypsin-like activity. Plays a major role in the degradation of misfolded proteins. The protein is ATP-dependent Clp protease proteolytic subunit 2 of Pseudomonas aeruginosa (strain ATCC 15692 / DSM 22644 / CIP 104116 / JCM 14847 / LMG 12228 / 1C / PRS 101 / PAO1).